The sequence spans 448 residues: Histidine--tRNA ligase (448 aa).

This sequence belongs to the class-II aminoacyl-tRNA synthetase family. Homodimer.

It is found in the cytoplasm. The catalysed reaction is tRNA(His) + L-histidine + ATP = L-histidyl-tRNA(His) + AMP + diphosphate + H(+). In Treponema denticola (strain ATCC 35405 / DSM 14222 / CIP 103919 / JCM 8153 / KCTC 15104), this protein is Histidine--tRNA ligase.